The sequence spans 379 residues: Cytoplasmic tRNA 2-thiolation protein 1 (379 aa).

It belongs to the TtcA family. CTU1/NCS6/ATPBD3 subfamily.

The protein localises to the cytoplasm. Its pathway is tRNA modification; 5-methoxycarbonylmethyl-2-thiouridine-tRNA biosynthesis. Plays a central role in 2-thiolation of mcm(5)S(2)U at tRNA wobble positions of tRNA(Lys), tRNA(Glu) and tRNA(Gln). Directly binds tRNAs and probably acts by catalyzing adenylation of tRNAs, an intermediate required for 2-thiolation. It is unclear whether it acts as a sulfurtransferase that transfers sulfur from thiocarboxylated URM1 onto the uridine of tRNAs at wobble position. Prior mcm(5) tRNA modification by the elongator complex is required for 2-thiolation. May also be involved in protein urmylation. This chain is Cytoplasmic tRNA 2-thiolation protein 1, found in Lodderomyces elongisporus (strain ATCC 11503 / CBS 2605 / JCM 1781 / NBRC 1676 / NRRL YB-4239) (Yeast).